The following is a 472-amino-acid chain: Succinate-semialdehyde dehydrogenase [NADP(+)] (472 aa).

Residues 134–135 (WN), 158–161 (KHAS), and 210–211 (GS) each bind NADP(+). E232 (proton acceptor) is an active-site residue. NADP(+) is bound at residue L233. C266 serves as the catalytic Nucleophile. An NADP(+)-binding site is contributed by E363.

The protein belongs to the aldehyde dehydrogenase family.

The catalysed reaction is succinate semialdehyde + NADP(+) + H2O = succinate + NADPH + 2 H(+). In terms of biological role, catalyzes the NADP(+)-dependent oxidation of succinate semialdehyde to succinate. It is believed to be the main source of succinate semialdehyde dehydrogenase activity in Mycobacterium. The protein is Succinate-semialdehyde dehydrogenase [NADP(+)] (gabD1) of Mycobacterium avium (strain 104).